The primary structure comprises 409 residues: Arginine deiminase (409 aa).

The active-site Amidino-cysteine intermediate is the C399.

Belongs to the arginine deiminase family.

Its subcellular location is the cytoplasm. The catalysed reaction is L-arginine + H2O = L-citrulline + NH4(+). Its pathway is amino-acid degradation; L-arginine degradation via ADI pathway; carbamoyl phosphate from L-arginine: step 1/2. The polypeptide is Arginine deiminase (Streptococcus sanguinis (strain SK36)).